The following is a 273-amino-acid chain: Ribosomal RNA small subunit methyltransferase A (273 aa).

Residues Asn-18, Leu-20, Gly-45, Glu-66, Asp-91, and Asn-113 each coordinate S-adenosyl-L-methionine.

This sequence belongs to the class I-like SAM-binding methyltransferase superfamily. rRNA adenine N(6)-methyltransferase family. RsmA subfamily.

The protein localises to the cytoplasm. The catalysed reaction is adenosine(1518)/adenosine(1519) in 16S rRNA + 4 S-adenosyl-L-methionine = N(6)-dimethyladenosine(1518)/N(6)-dimethyladenosine(1519) in 16S rRNA + 4 S-adenosyl-L-homocysteine + 4 H(+). Functionally, specifically dimethylates two adjacent adenosines (A1518 and A1519) in the loop of a conserved hairpin near the 3'-end of 16S rRNA in the 30S particle. May play a critical role in biogenesis of 30S subunits. In Klebsiella pneumoniae (strain 342), this protein is Ribosomal RNA small subunit methyltransferase A.